A 144-amino-acid chain; its full sequence is Large ribosomal subunit protein uL16 (144 aa).

Basic residues predominate over residues 1-16 (MLTPKRVKHRKQHRGK). The disordered stretch occupies residues 1 to 22 (MLTPKRVKHRKQHRGKMAGNAK).

This sequence belongs to the universal ribosomal protein uL16 family. Part of the 50S ribosomal subunit.

Functionally, binds 23S rRNA and is also seen to make contacts with the A and possibly P site tRNAs. The chain is Large ribosomal subunit protein uL16 from Brevibacillus brevis (strain 47 / JCM 6285 / NBRC 100599).